The sequence spans 248 residues: Probable transcriptional regulatory protein Rsph17025_0577 (248 aa).

A disordered region spans residues 1–21; sequence MAGHSKWANIQHRKGKQDKLR.

It belongs to the TACO1 family.

The protein localises to the cytoplasm. This Cereibacter sphaeroides (strain ATCC 17025 / ATH 2.4.3) (Rhodobacter sphaeroides) protein is Probable transcriptional regulatory protein Rsph17025_0577.